A 184-amino-acid chain; its full sequence is Photosystem I assembly protein Ycf4 (184 aa).

The next 2 helical transmembrane spans lie at 19–39 (ISNF…VLVG) and 64–84 (LVMS…WCTI).

This sequence belongs to the Ycf4 family.

It is found in the plastid. The protein localises to the chloroplast thylakoid membrane. Its function is as follows. Seems to be required for the assembly of the photosystem I complex. The chain is Photosystem I assembly protein Ycf4 from Oenothera elata subsp. hookeri (Hooker's evening primrose).